Reading from the N-terminus, the 427-residue chain is MSVKWEKQEGNVGKLTFDIEQEKVKEGLDRAFVKVRKTLNVPGFRKGKVPRQIFNQRFGEEALYQDALDILLPEVYSQAIDEAGIDPVDTPQVNIESMEKGETWVLTAEVTVKPEVKLGDYKGLEVEKRETELTTEELEAELKQLQERQAELVVKEDAPAENGDTVILDFEGFKDGVAFEGGQAENHSLELGSGQFIPGFEEKLVGLKAGDEADIELTFPEEYHAEDLAGQPVVFKVKLHEIKTKEVPALDDELAKDIDEEVETLDELKEKISKRLQEAKEESVAQAKQEEVIAKAVENAEVDIPHAMVHHEADHLMNHFAQDLQAQGLTPELYYQFTGQTEEAMHAQMETDAEKRVKMNLVLEAIAEAENIEPTEEAIDEEISTLAEKYGMEKDAVRAALGDMSELKSDLKIRKAIDVLLDSAVEK.

Residues 163–248 (GDTVILDFEG…LHEIKTKEVP (86 aa)) form the PPIase FKBP-type domain.

It belongs to the FKBP-type PPIase family. Tig subfamily.

The protein resides in the cytoplasm. It carries out the reaction [protein]-peptidylproline (omega=180) = [protein]-peptidylproline (omega=0). Its function is as follows. Involved in protein export. Acts as a chaperone by maintaining the newly synthesized protein in an open conformation. Functions as a peptidyl-prolyl cis-trans isomerase. The chain is Trigger factor from Listeria welshimeri serovar 6b (strain ATCC 35897 / DSM 20650 / CCUG 15529 / CIP 8149 / NCTC 11857 / SLCC 5334 / V8).